The chain runs to 252 residues: Hydroxyacylglutathione hydrolase (252 aa).

Zn(2+) contacts are provided by His-54, His-56, Asp-58, His-59, His-111, Asp-130, and His-170.

This sequence belongs to the metallo-beta-lactamase superfamily. Glyoxalase II family. In terms of assembly, monomer. Zn(2+) is required as a cofactor.

The enzyme catalyses an S-(2-hydroxyacyl)glutathione + H2O = a 2-hydroxy carboxylate + glutathione + H(+). The protein operates within secondary metabolite metabolism; methylglyoxal degradation; (R)-lactate from methylglyoxal: step 2/2. In terms of biological role, thiolesterase that catalyzes the hydrolysis of S-D-lactoyl-glutathione to form glutathione and D-lactic acid. The protein is Hydroxyacylglutathione hydrolase of Francisella tularensis subsp. holarctica (strain FTNF002-00 / FTA).